The following is a 229-amino-acid chain: Cytidylate kinase (229 aa).

10 to 18 (GFSSCGKST) contributes to the ATP binding site.

It belongs to the cytidylate kinase family. Type 1 subfamily.

The protein resides in the cytoplasm. The catalysed reaction is CMP + ATP = CDP + ADP. The enzyme catalyses dCMP + ATP = dCDP + ADP. The sequence is that of Cytidylate kinase from Bacteroides thetaiotaomicron (strain ATCC 29148 / DSM 2079 / JCM 5827 / CCUG 10774 / NCTC 10582 / VPI-5482 / E50).